A 111-amino-acid chain; its full sequence is Ghrelin (111 aa).

An N-terminal signal peptide occupies residues 1-26 (MRQMKRTAYIILLVCVLALWMDSVQA). Positions 28–37 (SSFLSPSQRP) are enriched in polar residues. Residues 28 to 53 (SSFLSPSQRPQGKDKKPPRVGRRDSD) form a disordered region. A lipid anchor (O-decanoyl serine; alternate) is attached at Ser-29. Ser-29 is lipidated: O-hexanoyl serine; alternate. Ser-29 carries O-octanoyl serine; alternate lipidation. Over residues 38–53 (QGKDKKPPRVGRRDSD) the composition is skewed to basic and acidic residues. Val-47 bears the Valine amide mark. A propeptide spans 51–111 (DSDGILDLFM…DLLMDTPAKE (61 aa)) (removed in mature form).

It belongs to the motilin family. O-octanoylated by GOAT/MBOAT4. O-octanoylation or O-decanoylation is essential for activity. The O-decanoylated form ghrelin-21-C10 differs in the length of the carbon backbone of the carboxylic acid forming an ester bond with Ser-29. 44% of eel ghrelin is O-decanoylated. As to expression, highest levels in stomach and anterior intestine. Lower levels in posterior intestine, kidney and brain. Low levels in heart, head kidney and middle intestine.

Its subcellular location is the secreted. Functionally, ligand for growth hormone secretagogue receptor type 1 (GHSR). Induces the release of growth hormone from the pituitary. Has an appetite-stimulating effect, induces adiposity and stimulates gastric acid secretion. Involved in growth regulation. This chain is Ghrelin (ghrl), found in Anguilla japonica (Japanese eel).